We begin with the raw amino-acid sequence, 315 residues long: Small ribosomal subunit protein uS2 (315 aa).

The tract at residues 250–315 (LLEQGDAAKA…TESEKAPVSE (66 aa)) is disordered. Basic and acidic residues-rich tracts occupy residues 272–282 (VSAKNEAKSED) and 297–315 (TEAK…PVSE).

This sequence belongs to the universal ribosomal protein uS2 family.

The sequence is that of Small ribosomal subunit protein uS2 from Clavibacter michiganensis subsp. michiganensis (strain NCPPB 382).